A 209-amino-acid chain; its full sequence is GTP-binding nuclear protein Ran1A (209 aa).

The region spanning 1–162 (NFKLVIVGDG…LYLARKLAGD (162 aa)) is the Small GTPase Ran-type domain. Residue 9 to 16 (DGGTGKTT) participates in GTP binding. The tract at residues 28–36 (KKYEPTIGV) is switch-I. Residues G59, 113-116 (NKVD), and 141-143 (SAK) each bind GTP. Residues 59 to 75 (GQEKFGGLRDGYYIHGQ) are switch-II. Low complexity predominate over residues 187-196 (QHEAELAQAA). A disordered region spans residues 187–209 (QHEAELAQAASQPLPDDDDDAFD).

The protein belongs to the small GTPase superfamily. Ran family. In terms of assembly, found in a nuclear export complex with RanGTP, exportin and pre-miRNA.

Its subcellular location is the nucleus. Functionally, GTP-binding protein involved in nucleocytoplasmic transport. Required for the import of protein into the nucleus and also for RNA export. Involved in chromatin condensation and control of cell cycle. The protein is GTP-binding nuclear protein Ran1A (RAN1A) of Lotus japonicus (Lotus corniculatus var. japonicus).